The sequence spans 350 residues: S-adenosylmethionine:tRNA ribosyltransferase-isomerase (350 aa).

Belongs to the QueA family. In terms of assembly, monomer.

It is found in the cytoplasm. The catalysed reaction is 7-aminomethyl-7-carbaguanosine(34) in tRNA + S-adenosyl-L-methionine = epoxyqueuosine(34) in tRNA + adenine + L-methionine + 2 H(+). It functions in the pathway tRNA modification; tRNA-queuosine biosynthesis. Functionally, transfers and isomerizes the ribose moiety from AdoMet to the 7-aminomethyl group of 7-deazaguanine (preQ1-tRNA) to give epoxyqueuosine (oQ-tRNA). This Aliivibrio fischeri (strain MJ11) (Vibrio fischeri) protein is S-adenosylmethionine:tRNA ribosyltransferase-isomerase.